Here is a 277-residue protein sequence, read N- to C-terminus: Large ribosomal subunit protein uL2 (277 aa).

2 disordered regions span residues 38 to 58 (HRKG…GGGH) and 219 to 277 (TVRG…RKNK).

The protein belongs to the universal ribosomal protein uL2 family. As to quaternary structure, part of the 50S ribosomal subunit. Forms a bridge to the 30S subunit in the 70S ribosome.

Its function is as follows. One of the primary rRNA binding proteins. Required for association of the 30S and 50S subunits to form the 70S ribosome, for tRNA binding and peptide bond formation. It has been suggested to have peptidyltransferase activity; this is somewhat controversial. Makes several contacts with the 16S rRNA in the 70S ribosome. This Bacillus pumilus (strain SAFR-032) protein is Large ribosomal subunit protein uL2.